Consider the following 322-residue polypeptide: Large ribosomal subunit protein uL29m (322 aa).

Positions 1–44 (MLNVQRGLHTTVRLSARTKYTKPKPKPQARVIKSEPSQVTHHDN) are disordered.

The protein belongs to the universal ribosomal protein uL29 family. As to quaternary structure, component of the mitochondrial large ribosomal subunit. Mature mitochondrial ribosomes consist of a small (37S) and a large (54S) subunit. The 37S subunit contains at least 33 different proteins and 1 molecule of RNA (15S). The 54S subunit contains at least 45 different proteins and 1 molecule of RNA (21S).

The protein localises to the mitochondrion. In Vanderwaltozyma polyspora (strain ATCC 22028 / DSM 70294 / BCRC 21397 / CBS 2163 / NBRC 10782 / NRRL Y-8283 / UCD 57-17) (Kluyveromyces polysporus), this protein is Large ribosomal subunit protein uL29m (MRPL4).